Consider the following 271-residue polypeptide: Probable esterase D14L (271 aa).

The active-site Nucleophile is the serine 96. Residues aspartate 218 and histidine 247 contribute to the active site.

The protein belongs to the AB hydrolase superfamily. As to quaternary structure, component of an intracellular receptor complex involved in the detection of the smoke compound karrikin. In terms of tissue distribution, expressed constitutively in all organs (e.g. roots, stems, leaves, panicles and embryos).

The protein resides in the nucleus. It localises to the cytoplasm. Its function is as follows. May be involved in strigolactone signaling pathway. Essential for plant responses to karrikins, a class of butenolide compounds, structurally similar to strigolactones, released from burning vegetation that stimulate seed germination and enhance seedling photomorphogenesis. Mediates a specific perception of karrikin. Required for the establishment of symbiosis with the arbuscular mycorrhizal fungi (AMF) Rhizophagus irregularis and Gigaspora rosea. Karrikin binding induces a conformational change. The polypeptide is Probable esterase D14L (D14L) (Oryza sativa subsp. japonica (Rice)).